An 890-amino-acid polypeptide reads, in one-letter code: tRNase Z TRZ3, mitochondrial (890 aa).

The transit peptide at 1-44 (MINSMPYLHKNLRLLRLLSSKSSPFPLSLRPFSPRSFSLSTLFS) directs the protein to the mitochondrion. A disordered region spans residues 46–67 (SSSSSSMENNEATNGSKSSSNS).

It belongs to the RNase Z family. In terms of assembly, homodimer. It depends on Zn(2+) as a cofactor. Ca(2+) is required as a cofactor. Requires Mn(2+) as cofactor. Mg(2+) serves as cofactor.

The protein resides in the mitochondrion. It localises to the nucleus. The enzyme catalyses Endonucleolytic cleavage of RNA, removing extra 3' nucleotides from tRNA precursor, generating 3' termini of tRNAs. A 3'-hydroxy group is left at the tRNA terminus and a 5'-phosphoryl group is left at the trailer molecule.. Its function is as follows. Zinc phosphodiesterase, which displays tRNA 3'-processing endonuclease activity. Involved in tRNA maturation, by removing a 3'-trailer from precursor tRNA. Can process the mitochondrial tRNA-like structures (t-elements). Involved in the processing of small nucleolar RNAs (snoRNAs). This Arabidopsis thaliana (Mouse-ear cress) protein is tRNase Z TRZ3, mitochondrial.